The chain runs to 713 residues: G-protein coupled receptor-associated protein LMBRD2 (713 aa).

The Extracellular segment spans residues 1–3; sequence MSG. The chain crosses the membrane as a helical span at residues 4–21; it reads VALGIEIVSVFFLALFLL. Residues 22 to 32 lie on the Cytoplasmic side of the membrane; the sequence is HRYGDFKKQHK. The chain crosses the membrane as a helical span at residues 33–53; that stretch reads LVIVGTLLAWYLCFLIVFIIP. Residues 54 to 122 lie on the Extracellular side of the membrane; that stretch reads LDVSTTIYNR…SKPWSYIPRG (69 aa). N-linked (GlcNAc...) asparagine glycosylation is found at asparagine 76 and asparagine 89. A helical transmembrane segment spans residues 123 to 143; the sequence is IMPIFWRVVYWTSQFLTWILM. At 144 to 167 the chain is on the cytoplasmic side; sequence PFMQSYARSGGFSITGKIKTALIE. A helical transmembrane segment spans residues 168 to 188; the sequence is NAIYYGTYLLIFGALLIYVAV. At 189-203 the chain is on the extracellular side; the sequence is NPNLHLEWYQLQTIG. Residues 204 to 224 traverse the membrane as a helical segment; the sequence is IAAANTWGLFLLVLLMGYGLV. Residues 225 to 404 lie on the Cytoplasmic side of the membrane; the sequence is EIPRSQWNGA…ECLLRPWCSR (180 aa). A coiled-coil region spans residues 246–314; the sequence is KAAKLMTEKA…DDYEDFEEKN (69 aa). Residues 405 to 425 traverse the membrane as a helical segment; the sequence is ILAVILALFSTVVVWSECTFF. The Extracellular portion of the chain corresponds to 426–449; it reads SAKPVLSLFAVFIQQAEQTHNYIY. A helical transmembrane segment spans residues 450-470; it reads VEVVCFLSIFFLSICVYSTVF. Over 471–490 the chain is Cytoplasmic; it reads RIRVFNYYYLASHHQTDAYS. The chain crosses the membrane as a helical span at residues 491–511; sequence LLFSGMLFCRLTPPLCLNFLG. Over 512-538 the chain is Extracellular; the sequence is LTHMDVSISHQNIEPTAYTSIMGSLRV. A helical membrane pass occupies residues 539 to 559; sequence LPLIADVFYIYYPMLVLILCI. Residues 560 to 713 are Cytoplasmic-facing; it reads ATYFSLGTRC…QSNSRIFDDV (154 aa). Residues 587–620 adopt a coiled-coil conformation; it reads DLTDEGKELIKREKRKRQRLEDGETRRREWKERY. The interval 600–713 is disordered; it reads KRKRQRLEDG…QSNSRIFDDV (114 aa). Over residues 605 to 629 the composition is skewed to basic and acidic residues; it reads RLEDGETRRREWKERYPTNREDTSR. Polar residues predominate over residues 643–657; it reads TEMTTNRSSKYTRAS. Residues 658–667 show a composition bias toward basic and acidic residues; the sequence is NRTERDRIEL. The span at 701–713 shows a compositional bias: polar residues; that stretch reads SMSQSNSRIFDDV.

It belongs to the LIMR family.

The protein localises to the cell membrane. May associate with G-protein coupled receptors and regulate downstream signaling pathways. The chain is G-protein coupled receptor-associated protein LMBRD2 (lmbrd2) from Xenopus laevis (African clawed frog).